Reading from the N-terminus, the 425-residue chain is Succinate--CoA ligase [ADP-forming] subunit beta, mitochondrial (425 aa).

A mitochondrion-targeting transit peptide spans 1–14 (NNHGLQIQQQQQRN). The ATP-grasp domain occupies 23 to 250 (MELLQEAGVS…SNSAYRQKKI (228 aa)). Lysine 40 is subject to N6-acetyllysine. Tyrosine 46 carries the post-translational modification Phosphotyrosine. Lysine 50 is subject to N6-acetyllysine; alternate. Residue lysine 50 is modified to N6-succinyllysine; alternate. ATP is bound by residues lysine 60 and 67 to 69 (GRG). An N6-acetyllysine mark is found at lysine 91, lysine 101, lysine 105, and lysine 178. Mg(2+)-binding residues include asparagine 220 and aspartate 234. A Phosphoserine modification is found at serine 241. Residue asparagine 285 participates in substrate binding. Threonine 303 bears the Phosphothreonine mark. Lysine 330 is modified (N6-acetyllysine). 342–344 (GIM) is a substrate binding site. Lysine 400 carries the N6-acetyllysine modification.

It belongs to the succinate/malate CoA ligase beta subunit family. ATP-specific subunit beta subfamily. In terms of assembly, heterodimer of an alpha and a beta subunit. The beta subunit determines specificity for ATP. Interacts with ALAS2. Mg(2+) serves as cofactor.

Its subcellular location is the mitochondrion. It catalyses the reaction succinate + ATP + CoA = succinyl-CoA + ADP + phosphate. It functions in the pathway carbohydrate metabolism; tricarboxylic acid cycle; succinate from succinyl-CoA (ligase route): step 1/1. Functionally, ATP-specific succinyl-CoA synthetase functions in the citric acid cycle (TCA), coupling the hydrolysis of succinyl-CoA to the synthesis of ATP and thus represents the only step of substrate-level phosphorylation in the TCA. The beta subunit provides nucleotide specificity of the enzyme and binds the substrate succinate, while the binding sites for coenzyme A and phosphate are found in the alpha subunit. This Sus scrofa (Pig) protein is Succinate--CoA ligase [ADP-forming] subunit beta, mitochondrial.